Here is a 218-residue protein sequence, read N- to C-terminus: MTAQLEGIGMTSRRTRMRLVQRLREGGIESDRVLEVIGQVPRHIFLDEALSHRAYEDTSLPIGHGQTLSQPYIVARMTELLLAHAPQRVLELGTGSGYQTAVLSQLFPEIYSVERIRPLQDRARDRLRQLNVRNVLLKHADGGMGWPERGPFDGIIVTAAPVEVPRELLDQLADGGVLIAPVGEENQVLVEIIRKGNHFERHNLEPVHFVPLLGGVIR.

Residue serine 69 is part of the active site.

The protein belongs to the methyltransferase superfamily. L-isoaspartyl/D-aspartyl protein methyltransferase family.

The protein localises to the cytoplasm. It catalyses the reaction [protein]-L-isoaspartate + S-adenosyl-L-methionine = [protein]-L-isoaspartate alpha-methyl ester + S-adenosyl-L-homocysteine. Catalyzes the methyl esterification of L-isoaspartyl residues in peptides and proteins that result from spontaneous decomposition of normal L-aspartyl and L-asparaginyl residues. It plays a role in the repair and/or degradation of damaged proteins. This chain is Protein-L-isoaspartate O-methyltransferase 1, found in Marinobacter nauticus (strain ATCC 700491 / DSM 11845 / VT8) (Marinobacter aquaeolei).